The following is a 427-amino-acid chain: 3-isopropylmalate dehydratase large subunit (427 aa).

Cys-308, Cys-368, and Cys-371 together coordinate [4Fe-4S] cluster.

Belongs to the aconitase/IPM isomerase family. LeuC type 2 subfamily. In terms of assembly, heterodimer of LeuC and LeuD. Requires [4Fe-4S] cluster as cofactor.

It catalyses the reaction (2R,3S)-3-isopropylmalate = (2S)-2-isopropylmalate. It functions in the pathway amino-acid biosynthesis; L-leucine biosynthesis; L-leucine from 3-methyl-2-oxobutanoate: step 2/4. Its function is as follows. Catalyzes the isomerization between 2-isopropylmalate and 3-isopropylmalate, via the formation of 2-isopropylmaleate. In Geobacter sulfurreducens (strain ATCC 51573 / DSM 12127 / PCA), this protein is 3-isopropylmalate dehydratase large subunit.